Reading from the N-terminus, the 605-residue chain is Tyrosyl-DNA phosphodiesterase 1 (605 aa).

Residues 81 to 86 (RKKVKP) carry the Nuclear localization signal motif. Histidine 236 (nucleophile) is an active-site residue. Lysine 238 lines the substrate pocket. The segment at 379-382 (SLGS) is interaction with DNA. Catalysis depends on histidine 466, which acts as the Proton donor/acceptor. Residue lysine 468 participates in substrate binding.

It belongs to the tyrosyl-DNA phosphodiesterase family. Ubiquitous, with a low level in roots.

It is found in the nucleus. With respect to regulation, inhibited by vanadate analogs. In terms of biological role, DNA repair enzyme that can remove a variety of covalent adducts from DNA through hydrolysis of a 3'-phosphodiester bond, giving rise to DNA with a free 3' phosphate. Catalyzes the hydrolysis of dead-end complexes between DNA and the topoisomerase I active site tyrosine residue. This is Tyrosyl-DNA phosphodiesterase 1 from Arabidopsis thaliana (Mouse-ear cress).